The following is a 255-amino-acid chain: ParA family protein TC_0871 (255 aa).

It belongs to the ParA family.

The sequence is that of ParA family protein TC_0871 from Chlamydia muridarum (strain MoPn / Nigg).